A 146-amino-acid polypeptide reads, in one-letter code: [Ribosomal protein bS18]-alanine N-acetyltransferase (146 aa).

The 145-residue stretch at 2-146 (SIISQIEACD…ENAVVMACYL (145 aa)) folds into the N-acetyltransferase domain. 69–71 (IAI) is a binding site for acetyl-CoA. The Proton acceptor role is filled by E103. N108 is a binding site for acetyl-CoA. Residue Y114 is the Proton donor of the active site.

It belongs to the acetyltransferase family. RimI subfamily.

It localises to the cytoplasm. The enzyme catalyses N-terminal L-alanyl-[ribosomal protein bS18] + acetyl-CoA = N-terminal N(alpha)-acetyl-L-alanyl-[ribosomal protein bS18] + CoA + H(+). Its function is as follows. Acetylates the N-terminal alanine of ribosomal protein bS18. In Haemophilus influenzae (strain ATCC 51907 / DSM 11121 / KW20 / Rd), this protein is [Ribosomal protein bS18]-alanine N-acetyltransferase.